Here is a 168-residue protein sequence, read N- to C-terminus: Photosystem I assembly protein Ycf3 (168 aa).

3 TPR repeats span residues 35-68, 72-105, and 120-153; these read AFTY…EIDP, SYIL…NPFL, and GEQA…TPGN.

The protein belongs to the Ycf3 family.

The protein resides in the plastid. The protein localises to the chloroplast thylakoid membrane. Essential for the assembly of the photosystem I (PSI) complex. May act as a chaperone-like factor to guide the assembly of the PSI subunits. The sequence is that of Photosystem I assembly protein Ycf3 from Drimys granadensis.